We begin with the raw amino-acid sequence, 161 residues long: Putative pre-16S rRNA nuclease (161 aa).

It belongs to the YqgF nuclease family.

It localises to the cytoplasm. In terms of biological role, could be a nuclease involved in processing of the 5'-end of pre-16S rRNA. This chain is Putative pre-16S rRNA nuclease, found in Rhodospirillum rubrum (strain ATCC 11170 / ATH 1.1.1 / DSM 467 / LMG 4362 / NCIMB 8255 / S1).